We begin with the raw amino-acid sequence, 184 residues long: UPF0149 protein PSEEN5316 (184 aa).

Belongs to the UPF0149 family.

In Pseudomonas entomophila (strain L48), this protein is UPF0149 protein PSEEN5316.